The primary structure comprises 240 residues: Ribose-5-phosphate isomerase A (240 aa).

The tract at residues 1–23 (MKTSGGSDAAKRRAGESAAETVT) is disordered. Residues 32–35 (TGST), 92–95 (DGAD), and 111–114 (KGGG) each bind substrate. Catalysis depends on Glu-120, which acts as the Proton acceptor. Lys-138 is a binding site for substrate.

Belongs to the ribose 5-phosphate isomerase family. In terms of assembly, homodimer.

The catalysed reaction is aldehydo-D-ribose 5-phosphate = D-ribulose 5-phosphate. Its pathway is carbohydrate degradation; pentose phosphate pathway; D-ribose 5-phosphate from D-ribulose 5-phosphate (non-oxidative stage): step 1/1. Functionally, catalyzes the reversible conversion of ribose-5-phosphate to ribulose 5-phosphate. The sequence is that of Ribose-5-phosphate isomerase A from Halorubrum lacusprofundi (strain ATCC 49239 / DSM 5036 / JCM 8891 / ACAM 34).